Consider the following 287-residue polypeptide: Diaminopimelate epimerase (287 aa).

3 residues coordinate substrate: Asn-13, Gln-46, and Asn-66. Cys-75 (proton donor) is an active-site residue. Residues 76 to 77, Asn-166, Asn-199, and 217 to 218 each bind substrate; these read GN and ER. The active-site Proton acceptor is the Cys-226. Residue 227 to 228 participates in substrate binding; it reads GT.

Belongs to the diaminopimelate epimerase family. Homodimer.

It is found in the cytoplasm. The catalysed reaction is (2S,6S)-2,6-diaminopimelate = meso-2,6-diaminopimelate. Its pathway is amino-acid biosynthesis; L-lysine biosynthesis via DAP pathway; DL-2,6-diaminopimelate from LL-2,6-diaminopimelate: step 1/1. Catalyzes the stereoinversion of LL-2,6-diaminopimelate (L,L-DAP) to meso-diaminopimelate (meso-DAP), a precursor of L-lysine and an essential component of the bacterial peptidoglycan. The protein is Diaminopimelate epimerase of Paraburkholderia xenovorans (strain LB400).